Consider the following 213-residue polypeptide: Ras-like protein rasU (213 aa).

21–28 (GDGGVGKT) is a GTP binding site. The Effector region signature appears at 43 to 51 (YDPTIEDLY). GTP contacts are provided by residues 68–72 (DTAGQ) and 126–129 (NKSD). Cysteine methyl ester is present on Cys-210. The S-geranylgeranyl cysteine moiety is linked to residue Cys-210. The propeptide at 211-213 (KMI) is removed in mature form.

This sequence belongs to the small GTPase superfamily. Ras family.

The protein localises to the cell membrane. The enzyme catalyses GTP + H2O = GDP + phosphate + H(+). Its function is as follows. Ras proteins bind GDP/GTP and possess intrinsic GTPase activity. In Dictyostelium discoideum (Social amoeba), this protein is Ras-like protein rasU (rasU).